Here is a 384-residue protein sequence, read N- to C-terminus: Odorant receptor 46a, isoform B (384 aa).

The Cytoplasmic segment spans residues 1–37 (MVTEDFYKYQVWYFQILGVWQLPTWAADHQRRFQSMR). Residues 38–58 (FGFILVILFIMLLLFSFEMLN) form a helical membrane-spanning segment. N-linked (GlcNAc...) asparagine glycosylation is present at Asn-59. The Extracellular segment spans residues 59–65 (NISQVRE). A helical membrane pass occupies residues 66 to 86 (ILKVFFMFATEISCMAKLLHL). Topologically, residues 87–130 (KLKSRKLAGLVDAMLSPEFGVKSEQEMQMLELDRVAVVRMRNSY) are cytoplasmic. A helical transmembrane segment spans residues 131 to 151 (GIMSLGAASLILIVPCFDNFG). Residues 152–165 (ELPLAMLEVCSIEG) lie on the Extracellular side of the membrane. A helical transmembrane segment spans residues 166–186 (WICYWSQYLFHSICLLPTCVL). Residues 187–247 (NITYDSVAYS…YNRIVRFKDL (61 aa)) are Cytoplasmic-facing. A helical transmembrane segment spans residues 248–268 (VELFIKGPGSVQLMCSVLVLV). At 269–283 (SNLYDMSTMSIANGD) the chain is on the extracellular side. A helical transmembrane segment spans residues 284-304 (AIFMLKTCIYQLVMLWQIFII). The Cytoplasmic segment spans residues 305–348 (CYASNEVTVQSSRLCHSIYSSQWTGWNRANRRIVLLMMQRFNSP). The chain crosses the membrane as a helical span at residues 349-369 (MLLSTFNPTFAFSLEAFGSIV). A glycan (N-linked (GlcNAc...) asparagine) is linked at Asn-370. At 370–384 (NCSYSYFALLKRVNS) the chain is on the extracellular side.

Belongs to the insect chemoreceptor superfamily. Heteromeric odorant receptor channel (TC 1.A.69) family. Or2a subfamily. As to quaternary structure, interacts with Orco. Complexes exist early in the endomembrane system in olfactory sensory neurons (OSNs), coupling these complexes to the conserved ciliary trafficking pathway. As to expression, isoform B is expressed in the antenna.

The protein localises to the cell membrane. Odorant receptor which mediates acceptance or avoidance behavior, depending on its substrates. The odorant receptor repertoire encodes a large collection of odor stimuli that vary widely in identity, intensity, and duration. May form a complex with Orco to form odorant-sensing units, providing sensitive and prolonged odorant signaling and calcium permeability. The protein is Odorant receptor 46a, isoform B (Or46a) of Drosophila melanogaster (Fruit fly).